Consider the following 527-residue polypeptide: Phosphoenolpyruvate carboxykinase (ATP) (527 aa).

Positions 54, 190, and 196 each coordinate substrate. Residues K196, H215, and 231-239 (GLSGTGKTT) each bind ATP. Mn(2+) contacts are provided by K196 and H215. A Mn(2+)-binding site is contributed by D252. ATP is bound by residues E280, R317, 436-437 (RI), and T442. R317 contacts substrate.

It belongs to the phosphoenolpyruvate carboxykinase (ATP) family. It depends on Mn(2+) as a cofactor.

The protein resides in the cytoplasm. It catalyses the reaction oxaloacetate + ATP = phosphoenolpyruvate + ADP + CO2. It participates in carbohydrate biosynthesis; gluconeogenesis. Involved in the gluconeogenesis. Catalyzes the conversion of oxaloacetate (OAA) to phosphoenolpyruvate (PEP) through direct phosphoryl transfer between the nucleoside triphosphate and OAA. This Oceanobacillus iheyensis (strain DSM 14371 / CIP 107618 / JCM 11309 / KCTC 3954 / HTE831) protein is Phosphoenolpyruvate carboxykinase (ATP).